Here is a 203-residue protein sequence, read N- to C-terminus: Secreted phosphoprotein 24 (203 aa).

Positions 1–23 (MEKMVMKMLVIFVFGMNHWTCTG) are cleaved as a signal peptide. 2 cysteine pairs are disulfide-bonded: C86/C97 and C110/C128. A Phosphoserine modification is found at S90. Phosphoserine is present on residues S138, S139, S166, and S175. The interval 155–174 (NSHLLGLTPDRSRGEPLYER) is disordered. The segment covering 164-174 (DRSRGEPLYER) has biased composition (basic and acidic residues).

The protein belongs to the SPP2 family. In terms of processing, multiply phosphorylated at serine residues. Phosphorylation sites are present in the extracellular medium.

The protein localises to the secreted. Could coordinate an aspect of bone turnover. This is Secreted phosphoprotein 24 (SPP2) from Ovis aries (Sheep).